A 464-amino-acid chain; its full sequence is tRNA-2-methylthio-N(6)-dimethylallyladenosine synthase (464 aa).

In terms of domain architecture, MTTase N-terminal spans 5-122 (RKLYVKSFGC…LPEMLARVRD (118 aa)). [4Fe-4S] cluster contacts are provided by Cys-14, Cys-50, Cys-85, Cys-163, Cys-167, and Cys-170. The 235-residue stretch at 149 to 383 (KKRGPTAFVT…VLEASKTAFD (235 aa)) folds into the Radical SAM core domain. The region spanning 384–446 (RACMGRRFDI…PNSLAGQVVD (63 aa)) is the TRAM domain.

It belongs to the methylthiotransferase family. MiaB subfamily. As to quaternary structure, monomer. It depends on [4Fe-4S] cluster as a cofactor.

The protein localises to the cytoplasm. The catalysed reaction is N(6)-dimethylallyladenosine(37) in tRNA + (sulfur carrier)-SH + AH2 + 2 S-adenosyl-L-methionine = 2-methylsulfanyl-N(6)-dimethylallyladenosine(37) in tRNA + (sulfur carrier)-H + 5'-deoxyadenosine + L-methionine + A + S-adenosyl-L-homocysteine + 2 H(+). Catalyzes the methylthiolation of N6-(dimethylallyl)adenosine (i(6)A), leading to the formation of 2-methylthio-N6-(dimethylallyl)adenosine (ms(2)i(6)A) at position 37 in tRNAs that read codons beginning with uridine. This chain is tRNA-2-methylthio-N(6)-dimethylallyladenosine synthase, found in Azorhizobium caulinodans (strain ATCC 43989 / DSM 5975 / JCM 20966 / LMG 6465 / NBRC 14845 / NCIMB 13405 / ORS 571).